We begin with the raw amino-acid sequence, 475 residues long: Ribulose bisphosphate carboxylase large chain (475 aa).

Positions 1 to 2 (MS) are excised as a propeptide. The residue at position 3 (P3) is an N-acetylproline. K14 is modified (N6,N6,N6-trimethyllysine). Substrate is bound by residues N123 and T173. K175 (proton acceptor) is an active-site residue. K177 lines the substrate pocket. 3 residues coordinate Mg(2+): K201, D203, and E204. N6-carboxylysine is present on K201. H294 functions as the Proton acceptor in the catalytic mechanism. Substrate-binding residues include R295, H327, and S379.

The protein belongs to the RuBisCO large chain family. Type I subfamily. As to quaternary structure, heterohexadecamer of 8 large chains and 8 small chains; disulfide-linked. The disulfide link is formed within the large subunit homodimers. The cofactor is Mg(2+). The disulfide bond which can form in the large chain dimeric partners within the hexadecamer appears to be associated with oxidative stress and protein turnover.

The protein localises to the plastid. Its subcellular location is the chloroplast. The enzyme catalyses 2 (2R)-3-phosphoglycerate + 2 H(+) = D-ribulose 1,5-bisphosphate + CO2 + H2O. The catalysed reaction is D-ribulose 1,5-bisphosphate + O2 = 2-phosphoglycolate + (2R)-3-phosphoglycerate + 2 H(+). Functionally, ruBisCO catalyzes two reactions: the carboxylation of D-ribulose 1,5-bisphosphate, the primary event in carbon dioxide fixation, as well as the oxidative fragmentation of the pentose substrate in the photorespiration process. Both reactions occur simultaneously and in competition at the same active site. The polypeptide is Ribulose bisphosphate carboxylase large chain (Pinus pinea (Italian stone pine)).